Consider the following 83-residue polypeptide: MRLFLSLPVLVVVLSIVLEGPAPAQGTPDVSSALDKLKEFGNTLEDKARELISRIKQSELSAKMREWFSETFQKVKEKLKIDS.

The N-terminal stretch at 1 to 26 (MRLFLSLPVLVVVLSIVLEGPAPAQG) is a signal peptide.

The protein belongs to the apolipoprotein C1 family. Synthesized mainly in liver and to a minor degree in intestine. Also found in the lung and spleen.

The protein localises to the secreted. In terms of biological role, inhibitor of lipoprotein binding to the low density lipoprotein (LDL) receptor, LDL receptor-related protein, and very low density lipoprotein (VLDL) receptor. Associates with high density lipoproteins (HDL) and the triacylglycerol-rich lipoproteins in the plasma and makes up about 10% of the protein of the VLDL and 2% of that of HDL. Appears to interfere directly with fatty acid uptake and is also the major plasma inhibitor of cholesteryl ester transfer protein (CETP). Binds free fatty acids and reduces their intracellular esterification. Modulates the interaction of APOE with beta-migrating VLDL and inhibits binding of beta-VLDL to the LDL receptor-related protein. In Homo sapiens (Human), this protein is Apolipoprotein C-I (APOC1).